The sequence spans 103 residues: Cystatin-A8 (103 aa).

The disordered stretch occupies residues 1–20 (MESEEMLAGGLTEPRPATPE). Positions 51-55 (QVVAG) match the Secondary area of contact motif.

It belongs to the cystatin family.

The protein localises to the cytoplasm. In terms of biological role, this is an intracellular thiol proteinase inhibitor. In Sus scrofa (Pig), this protein is Cystatin-A8.